The sequence spans 339 residues: DNA-directed RNA polymerase subunit alpha (339 aa).

The tract at residues 1 to 233 (MVREEVAGST…DLFLPFLHAE (233 aa)) is alpha N-terminal domain (alpha-NTD). Residues 264–339 (KKGIPLNCIF…IDLLKNKLSF (76 aa)) are alpha C-terminal domain (alpha-CTD).

The protein belongs to the RNA polymerase alpha chain family. In plastids the minimal PEP RNA polymerase catalytic core is composed of four subunits: alpha, beta, beta', and beta''. When a (nuclear-encoded) sigma factor is associated with the core the holoenzyme is formed, which can initiate transcription.

It localises to the plastid. It is found in the chloroplast. It catalyses the reaction RNA(n) + a ribonucleoside 5'-triphosphate = RNA(n+1) + diphosphate. DNA-dependent RNA polymerase catalyzes the transcription of DNA into RNA using the four ribonucleoside triphosphates as substrates. This is DNA-directed RNA polymerase subunit alpha from Secale strictum (Mountain rye).